The chain runs to 288 residues: Glucose-1-phosphate thymidylyltransferase (288 aa).

Aspartate 108 and aspartate 223 together coordinate Mg(2+).

This sequence belongs to the glucose-1-phosphate thymidylyltransferase family. In terms of assembly, homotetramer. The cofactor is Mg(2+).

It catalyses the reaction dTTP + alpha-D-glucose 1-phosphate + H(+) = dTDP-alpha-D-glucose + diphosphate. Its function is as follows. Catalyzes the formation of dTDP-glucose, from dTTP and glucose 1-phosphate, as well as its pyrophosphorolysis. The polypeptide is Glucose-1-phosphate thymidylyltransferase (rmlA1) (Neisseria meningitidis serogroup A / serotype 4A (strain DSM 15465 / Z2491)).